Reading from the N-terminus, the 248-residue chain is Ubiquinone biosynthesis O-methyltransferase (248 aa).

4 residues coordinate S-adenosyl-L-methionine: Arg41, Gly72, Asp93, and Met136.

The protein belongs to the methyltransferase superfamily. UbiG/COQ3 family.

The catalysed reaction is a 3-demethylubiquinol + S-adenosyl-L-methionine = a ubiquinol + S-adenosyl-L-homocysteine + H(+). It carries out the reaction a 3-(all-trans-polyprenyl)benzene-1,2-diol + S-adenosyl-L-methionine = a 2-methoxy-6-(all-trans-polyprenyl)phenol + S-adenosyl-L-homocysteine + H(+). The protein operates within cofactor biosynthesis; ubiquinone biosynthesis. Functionally, O-methyltransferase that catalyzes the 2 O-methylation steps in the ubiquinone biosynthetic pathway. The chain is Ubiquinone biosynthesis O-methyltransferase from Rhizobium etli (strain ATCC 51251 / DSM 11541 / JCM 21823 / NBRC 15573 / CFN 42).